The sequence spans 561 residues: MPESKYRQQTIRAPRGTVLTAKSWLTEAPLRMLMNNLDPDVAENPHELVVYGGIGRAARNWECYDAIVDALTRLEADETLLIQSGKPVGVFKTHDNAPRVLIANSNLVPHWATWEHFNELDAKGLAMYGQMTAGSWIYIGSQGIVQGTYETFVEAGRQHYNGTLAGRWVLTAGLGGMGGAQPLAATLAGACSLTIECQQSRIDFRLRTRYVDEQAATLDDALARITRYTREGKAVSVALCANAADILPELVNRGVRPDLVTDQTSAHDPLHGYLPSGWRWEEYQKNAQSDPHGTMQAAKRSMAAHVRAMLAFSQMGVPTFDYGNNIRQMAKEMGVENAFDFPGFVPAYIRPLFCRGIGPFRWVALSGDPQDIYKTDAKVKEIVAEDKHLHHWLDMARERIHFQGLPARICWVGLEWRQKLGLAFNEMVRCGEVSAPIVIGRDHLDSGSVASPNRETEAMRDGSDAVSDWPLLNALLNTASGATWVSLHHGGGVGMGFSQHAGMVIVCDGTDEAAARIRRVLHNDPATGVMRHADAGYDLAVECAVEQGLNLPMVAATQGKG.

NAD(+)-binding positions include 52–53 (GG), glutamine 130, 176–178 (GMG), glutamate 196, arginine 201, 242–243 (NA), 263–267 (QTSAH), 273–274 (YL), and tyrosine 322. Cysteine 410 is a catalytic residue. Glycine 492 is an NAD(+) binding site.

The protein belongs to the urocanase family. The cofactor is NAD(+).

Its subcellular location is the cytoplasm. The catalysed reaction is 4-imidazolone-5-propanoate = trans-urocanate + H2O. It functions in the pathway amino-acid degradation; L-histidine degradation into L-glutamate; N-formimidoyl-L-glutamate from L-histidine: step 2/3. Its function is as follows. Catalyzes the conversion of urocanate to 4-imidazolone-5-propionate. This Salmonella agona (strain SL483) protein is Urocanate hydratase.